The following is a 136-amino-acid chain: Translation initiation factor 5A (136 aa).

Residue lysine 36 is modified to Hypusine.

The protein belongs to the eIF-5A family.

The protein resides in the cytoplasm. Its function is as follows. Functions by promoting the formation of the first peptide bond. The chain is Translation initiation factor 5A (eIF5A) from Hyperthermus butylicus (strain DSM 5456 / JCM 9403 / PLM1-5).